A 407-amino-acid chain; its full sequence is Aminomethyltransferase, mitochondrial (407 aa).

The N-terminal 29 residues, 1 to 29 (MRGGLWQLGQSITRRLGQSDKKTIVRRCY), are a transit peptide targeting the mitochondrion. 3 residues coordinate substrate: E234, R265, and Y403.

Belongs to the GcvT family. In terms of assembly, the glycine cleavage system is composed of four proteins: P, T, L and H.

Its subcellular location is the mitochondrion. It carries out the reaction N(6)-[(R)-S(8)-aminomethyldihydrolipoyl]-L-lysyl-[protein] + (6S)-5,6,7,8-tetrahydrofolate = N(6)-[(R)-dihydrolipoyl]-L-lysyl-[protein] + (6R)-5,10-methylene-5,6,7,8-tetrahydrofolate + NH4(+). Its function is as follows. The glycine cleavage system catalyzes the degradation of glycine. The protein is Aminomethyltransferase, mitochondrial (GDCST) of Flaveria anomala (Yellowtops).